We begin with the raw amino-acid sequence, 557 residues long: Aerobic glycerol-3-phosphate dehydrogenase (557 aa).

FAD is bound at residue 21 to 49 (DVVIIGGGITGAGIALDASERGMKVALVE).

The protein belongs to the FAD-dependent glycerol-3-phosphate dehydrogenase family. FAD serves as cofactor.

It is found in the cytoplasm. The catalysed reaction is a quinone + sn-glycerol 3-phosphate = dihydroxyacetone phosphate + a quinol. Its pathway is polyol metabolism; glycerol degradation via glycerol kinase pathway; glycerone phosphate from sn-glycerol 3-phosphate (aerobic route): step 1/1. This is Aerobic glycerol-3-phosphate dehydrogenase (glpD) from Staphylococcus saprophyticus subsp. saprophyticus (strain ATCC 15305 / DSM 20229 / NCIMB 8711 / NCTC 7292 / S-41).